The following is a 185-amino-acid chain: UPF0149 protein XF_2010 (185 aa).

Belongs to the UPF0149 family.

The polypeptide is UPF0149 protein XF_2010 (Xylella fastidiosa (strain 9a5c)).